The sequence spans 520 residues: Pleckstrin homology domain-containing family A member 8 (520 aa).

Residues 1-93 (MEGVLYKWTN…WLVALGSAKA (93 aa)) enclose the PH domain. At Thr-139 the chain carries Phosphothreonine. Position 145 is a phosphoserine (Ser-145). A Phosphothreonine modification is found at Thr-153. The span at 275 to 285 (GEESLGNHDSD) shows a compositional bias: basic and acidic residues. The disordered stretch occupies residues 275–305 (GEESLGNHDSDLAQPELHSTSSSPESHWEED). The segment at 311-520 (TFFSTMNTSF…VHGLESDEVV (210 aa)) is glycolipid transfer protein homology domain.

As to quaternary structure, homodimer. Interacts with ARF1; the interaction together with phosphatidylinositol 4-phosphate binding is required for FAPP2 GlcCer transfer ability.

The protein resides in the cytoplasm. It is found in the golgi apparatus. Its subcellular location is the trans-Golgi network membrane. The protein localises to the membrane. Functionally, cargo transport protein that is required for apical transport from the trans-Golgi network (TGN). Transports AQP2 from the trans-Golgi network (TGN) to sites of AQP2 phosphorylation. Mediates the non-vesicular transport of glucosylceramide (GlcCer) from the trans-Golgi network (TGN) to the plasma membrane and plays a pivotal role in the synthesis of complex glycosphingolipids. Binding of both phosphatidylinositol 4-phosphate (PIP) and ARF1 are essential for the GlcCer transfer ability. Also required for primary cilium formation, possibly by being involved in the transport of raft lipids to the apical membrane, and for membrane tubulation. This chain is Pleckstrin homology domain-containing family A member 8 (PLEKHA8), found in Bos taurus (Bovine).